Reading from the N-terminus, the 173-residue chain is Alpha-crystallin A chain (173 aa).

N-acetylmethionine is present on Met-1. The tract at residues Met-1 to Glu-63 is required for complex formation with BFSP1 and BFSP2. Residue Gln-6 is modified to Deamidated glutamine; partial. Ser-45 is modified (phosphoserine). Gln-50 is subject to Deamidated glutamine; partial. The 111-residue stretch at Leu-52–Ser-162 folds into the sHSP domain. Lys-70 is modified (N6-acetyllysine). Residue Gln-90 is modified to Deamidated glutamine; partial. Lys-99 bears the N6-acetyllysine mark. His-100 is a binding site for Zn(2+). Residue Asn-101 is modified to Deamidated asparagine; partial. Zn(2+) contacts are provided by Glu-102 and His-107. A Phosphoserine modification is found at Ser-122. Asn-123 is subject to Deamidated asparagine; partial. The tract at residues Pro-144–Ser-173 is disordered. Gln-147 carries the post-translational modification Deamidated glutamine; partial. Residues Gly-153 to Pro-167 show a composition bias toward basic and acidic residues. Residue His-154 coordinates Zn(2+). Ser-162 carries an O-linked (GlcNAc) serine glycan.

This sequence belongs to the small heat shock protein (HSP20) family. As to quaternary structure, heteromer composed of three CRYAA and one CRYAB subunits. Inter-subunit bridging via zinc ions enhances stability, which is crucial as there is no protein turn over in the lens. Can also form homodimers and homotetramers (dimers of dimers) which serve as the building blocks of homooligomers. Within homooligomers, the zinc-binding motif is created from residues of 3 different molecules. His-100 and Glu-102 from one molecule are ligands of the zinc ion, and His-107 and His-154 residues from additional molecules complete the site with tetrahedral coordination geometry. Part of a complex required for lens intermediate filament formation composed of BFSP1, BFSP2 and CRYAA. In terms of processing, acetylation at Lys-70 may increase chaperone activity. Post-translationally, undergoes age-dependent proteolytical cleavage at the C-terminus.

The protein localises to the cytoplasm. The protein resides in the nucleus. Its function is as follows. Contributes to the transparency and refractive index of the lens. Acts as a chaperone, preventing aggregation of various proteins under a wide range of stress conditions. Required for the correct formation of lens intermediate filaments as part of a complex composed of BFSP1, BFSP2 and CRYAA. The polypeptide is Alpha-crystallin A chain (CRYAA) (Otolemur crassicaudatus (Brown greater galago)).